The primary structure comprises 158 residues: Transcription elongation factor GreA (158 aa).

Residues 45 to 72 (AEYHAAREQQSFIEGRIKQLEGELSHAE) adopt a coiled-coil conformation.

The protein belongs to the GreA/GreB family.

Functionally, necessary for efficient RNA polymerase transcription elongation past template-encoded arresting sites. The arresting sites in DNA have the property of trapping a certain fraction of elongating RNA polymerases that pass through, resulting in locked ternary complexes. Cleavage of the nascent transcript by cleavage factors such as GreA or GreB allows the resumption of elongation from the new 3'terminus. GreA releases sequences of 2 to 3 nucleotides. In Xylella fastidiosa (strain M23), this protein is Transcription elongation factor GreA.